The following is a 310-amino-acid chain: Protein CUP-SHAPED COTYLEDON 1 (310 aa).

Positions 20–172 constitute an NAC domain; the sequence is MPPGFRFHPT…EWVLCKVCLK (153 aa). A DNA-binding region spans residues 119–178; it reads LGMKKTLVFYKGRAPKGEKSCWVMHEYRLDGKFSYHYISSSAKDEWVLCKVCLKSGVVSR. Involved in transactivation activity regions lie at residues 179–210 and 306–310; these read ETNL…NTFA and WPFTL.

As to expression, expressed in inflorescence stems, rosette leaves, aerial parts of seedlings, flowers, floral buds and roots.

The protein localises to the nucleus. Transcription activator of STM and KNAT6. Involved in molecular mechanisms regulating shoot apical meristem (SAM) formation during embryogenesis and organ separation. Required for the fusion of septa of gynoecia along the length of the ovaries. Activates the shoot formation in callus in a STM-dependent manner. Seems to act as an inhibitor of cell division. The polypeptide is Protein CUP-SHAPED COTYLEDON 1 (NAC054) (Arabidopsis thaliana (Mouse-ear cress)).